The chain runs to 108 residues: UPF0235 protein MM_0822 (108 aa).

This sequence belongs to the UPF0235 family.

In Methanosarcina mazei (strain ATCC BAA-159 / DSM 3647 / Goe1 / Go1 / JCM 11833 / OCM 88) (Methanosarcina frisia), this protein is UPF0235 protein MM_0822.